Reading from the N-terminus, the 377-residue chain is uncharacterized protein (377 aa).

5 disordered regions span residues 10–79, 91–141, 182–257, 265–284, and 289–326; these read YSDG…NVNN, KKNN…DKEE, EAKK…TTTT, ENEN…EPIE, and LEFN…KEEP. Composition is skewed to low complexity over residues 14–24, 46–79, and 93–124; these read IPQPTITPPTQ, NKNN…NVNN, and NNNN…FNDN. Composition is skewed to basic and acidic residues over residues 182-196 and 209-218; these read EAKK…KRGE and QTPDKKKKLE. Low complexity predominate over residues 221–257; sequence TSKNNNKSSTTKTELTNTTTNTSSTTNPTTDTTTTTT. Basic and acidic residues-rich tracts occupy residues 265–274 and 292–303; these read ENENQEKENN and NKFEEKPIKEVK. Over residues 311-320 the composition is skewed to basic residues; that stretch reads KRNKKRNNPK.

This is an uncharacterized protein from Dictyostelium discoideum (Social amoeba).